Consider the following 424-residue polypeptide: Histidine--tRNA ligase (424 aa).

Belongs to the class-II aminoacyl-tRNA synthetase family. As to quaternary structure, homodimer.

Its subcellular location is the cytoplasm. The enzyme catalyses tRNA(His) + L-histidine + ATP = L-histidyl-tRNA(His) + AMP + diphosphate + H(+). This chain is Histidine--tRNA ligase, found in Shewanella amazonensis (strain ATCC BAA-1098 / SB2B).